A 141-amino-acid polypeptide reads, in one-letter code: Large ribosomal subunit protein uL11 (141 aa).

Belongs to the universal ribosomal protein uL11 family. In terms of assembly, part of the ribosomal stalk of the 50S ribosomal subunit. Interacts with L10 and the large rRNA to form the base of the stalk. L10 forms an elongated spine to which L12 dimers bind in a sequential fashion forming a multimeric L10(L12)X complex. Post-translationally, one or more lysine residues are methylated.

Forms part of the ribosomal stalk which helps the ribosome interact with GTP-bound translation factors. The chain is Large ribosomal subunit protein uL11 from Thermosipho africanus (strain TCF52B).